A 390-amino-acid polypeptide reads, in one-letter code: S-adenosylmethionine synthase 3 (390 aa).

A Mg(2+)-binding site is contributed by Glu9. Residue His15 participates in ATP binding. Residue Glu43 participates in K(+) binding. Residues Glu56 and Gln99 each coordinate L-methionine. Residues Asp167 to Lys169, Ser235 to Phe238, Asp246, Arg252 to Lys253, Ala269, Lys273, and Lys277 each bind ATP. Asp246 serves as a coordination point for L-methionine. Residue Lys277 participates in L-methionine binding.

Belongs to the AdoMet synthase family. As to quaternary structure, homotetramer. Interacts with GRF3. It depends on Mn(2+) as a cofactor. Mg(2+) is required as a cofactor. Co(2+) serves as cofactor. Requires K(+) as cofactor.

Its subcellular location is the cytoplasm. It catalyses the reaction L-methionine + ATP + H2O = S-adenosyl-L-methionine + phosphate + diphosphate. Its pathway is amino-acid biosynthesis; S-adenosyl-L-methionine biosynthesis; S-adenosyl-L-methionine from L-methionine: step 1/1. Inhibited by 5,5'-dithiobis-2-nitrobenzoic acid (DTNB) and N-ethylmaleimide (NEM) (in vitro). Functionally, catalyzes the formation of S-adenosylmethionine from methionine and ATP. The reaction comprises two steps that are both catalyzed by the same enzyme: formation of S-adenosylmethionine (AdoMet) and triphosphate, and subsequent hydrolysis of the triphosphate. Involved in the biosynthesis of lignin. This chain is S-adenosylmethionine synthase 3 (METK3), found in Arabidopsis thaliana (Mouse-ear cress).